A 152-amino-acid polypeptide reads, in one-letter code: Proteolipid protein 2 (152 aa).

Residue asparagine 18 is glycosylated (N-linked (GlcNAc...) asparagine). The MARVEL domain occupies 19–137 (FSRTRKGILL…DAYVTFPVRQ (119 aa)). The next 3 membrane-spanning stretches (helical) occupy residues 25 to 45 (GILL…FSAS), 48 to 68 (GYSS…VVYM), and 85 to 105 (FFRT…VLVE). Asparagine 108 carries N-linked (GlcNAc...) asparagine glycosylation. A helical transmembrane segment spans residues 112-132 (IVAGVLGLIATCLFGYDAYVT).

Enriched in colonic mucosa. The expression of A4 follows a gradient along the crypto-villus axis with the most abundant message occurring in the lower half of the crypt.

Its subcellular location is the membrane. May play a role in cell differentiation in the intestinal epithelium. The sequence is that of Proteolipid protein 2 (PLP2) from Homo sapiens (Human).